The following is a 430-amino-acid chain: Small ribosomal subunit protein uS5m (430 aa).

The S5 DRBM domain maps to 218 to 282 (FDTRILEVRN…NRAVHHLHYI (65 aa)).

It belongs to the universal ribosomal protein uS5 family. In terms of assembly, component of the mitochondrial small ribosomal subunit (mt-SSU). Mature mammalian 55S mitochondrial ribosomes consist of a small (28S) and a large (39S) subunit. The 28S small subunit contains a 12S ribosomal RNA (12S mt-rRNA) and 30 different proteins. The 39S large subunit contains a 16S rRNA (16S mt-rRNA), a copy of mitochondrial valine transfer RNA (mt-tRNA(Val)), which plays an integral structural role, and 52 different proteins.

The protein localises to the mitochondrion. The sequence is that of Small ribosomal subunit protein uS5m (MRPS5) from Homo sapiens (Human).